Consider the following 1062-residue polypeptide: SLIT-ROBO Rho GTPase-activating protein 1 (1062 aa).

Residues 19 to 314 (SQVKEIRAQL…AVDNLEPRSD (296 aa)) form the F-BAR domain. Residues 352-382 (QAELMLRNQQLQSRLATLKIESEEVKKTTEA) are a coiled coil. Ser-416 is modified (phosphoserine). The Rho-GAP domain occupies 481 to 671 (GRRNSHARHQ…TIIIHHETIF (191 aa)). The region spanning 720 to 779 (CEPIEAIAKFDYVGRSARELSFKKGASLLLYHRASEDWWEGRHNGIDGLVPHQYIVVQDM) is the SH3 domain. The span at 785–799 (DTLSQKADSEASSGP) shows a compositional bias: polar residues. The tract at residues 785–931 (DTLSQKADSE…TGFNDHKPLD (147 aa)) is disordered. Phosphoserine is present on residues Ser-812 and Ser-894. The segment covering 899–908 (SRHDSLKKID) has biased composition (basic and acidic residues). Ser-909 carries the post-translational modification Phosphoserine. Polar residues predominate over residues 914-923 (RSTSSGQYTG). Positions 933 to 960 (ETIAQDIEETMNTALNELRELERQSTVK) form a coiled coil. Residues 974–988 (KNSPTPATSTESLSP) are compositionally biased toward polar residues. Disordered regions lie at residues 974–1013 (KNSPTPATSTESLSPLHNVALRGSEPQIRRSTSSSSETMS) and 1028–1062 (KPPALRPKPAVLPKTNPTMGPAAPSQGPTDKSCTM). Ser-976 is modified (phosphoserine). Position 978 is a phosphothreonine (Thr-978). Over residues 1004-1013 (STSSSSETMS) the composition is skewed to low complexity. At Ser-1009 the chain carries Phosphoserine. Residues 1053–1062 (QGPTDKSCTM) are compositionally biased toward polar residues.

In terms of assembly, homodimer. Forms a heterooligomer with SRGAP2 and SRGAP3 through its F-BAR domain. Interacts with CDC42 and RHOA. Interacts with FASLG. Interacts (via SH3 domain) with ROBO1.

In terms of biological role, GTPase-activating protein for RhoA and Cdc42 small GTPases. Together with CDC42 seems to be involved in the pathway mediating the repulsive signaling of Robo and Slit proteins in neuronal migration. SLIT2, probably through interaction with ROBO1, increases the interaction of SRGAP1 with ROBO1 and inactivates CDC42. The protein is SLIT-ROBO Rho GTPase-activating protein 1 (Srgap1) of Mus musculus (Mouse).